The sequence spans 335 residues: Flagellar P-ring protein (335 aa).

A signal peptide spans 1–17; sequence MNKPMLMLITFATSLLA.

The protein belongs to the FlgI family. In terms of assembly, the basal body constitutes a major portion of the flagellar organelle and consists of four rings (L,P,S, and M) mounted on a central rod.

The protein resides in the periplasm. It localises to the bacterial flagellum basal body. Functionally, assembles around the rod to form the L-ring and probably protects the motor/basal body from shearing forces during rotation. This is Flagellar P-ring protein from Borreliella burgdorferi (strain ZS7) (Borrelia burgdorferi).